A 130-amino-acid chain; its full sequence is Small ribosomal subunit protein uS11c (130 aa).

This sequence belongs to the universal ribosomal protein uS11 family. As to quaternary structure, part of the 30S ribosomal subunit.

It is found in the plastid. It localises to the chloroplast. The chain is Small ribosomal subunit protein uS11c from Mesostigma viride (Green alga).